The chain runs to 318 residues: B3 domain-containing protein At1g05930 (318 aa).

The segment at residues 201–293 (FNRLISNDFL…VLCFAMRQWR (93 aa)) is a DNA-binding region (TF-B3).

It is found in the nucleus. In Arabidopsis thaliana (Mouse-ear cress), this protein is B3 domain-containing protein At1g05930.